Reading from the N-terminus, the 445-residue chain is 4-hydroxyphenylpyruvate dioxygenase (445 aa).

Positions 1–11 (MGHQNAAVSEN) are enriched in polar residues. The segment at 1 to 20 (MGHQNAAVSENQNHDDGAAS) is disordered. VOC domains follow at residues 46–192 (RFHH…YVSY) and 223–383 (RLDH…IFTK). Fe cation-binding residues include His-226, His-308, and Glu-394.

It belongs to the 4HPPD family. In terms of assembly, homodimer. The cofactor is Fe cation.

The protein resides in the cytoplasm. It carries out the reaction 3-(4-hydroxyphenyl)pyruvate + O2 = homogentisate + CO2. It participates in amino-acid degradation; L-phenylalanine degradation; acetoacetate and fumarate from L-phenylalanine: step 3/6. The protein operates within cofactor biosynthesis; prenylquinone biosynthesis. Its function is as follows. Catalyzes the conversion of 4-hydroxyphenylpyruvic acid to homogentisic acid, one of the steps in tyrosine catabolism. The sequence is that of 4-hydroxyphenylpyruvate dioxygenase (HPD) from Arabidopsis thaliana (Mouse-ear cress).